The following is a 493-amino-acid chain: Glutamate--tRNA ligase (493 aa).

Positions 10 to 20 (PSPTGDPHVGT) match the 'HIGH' region motif. Residues 251–255 (KLSKR) carry the 'KMSKS' region motif. Residue K254 coordinates ATP.

The protein belongs to the class-I aminoacyl-tRNA synthetase family. Glutamate--tRNA ligase type 1 subfamily. In terms of assembly, monomer.

It is found in the cytoplasm. The enzyme catalyses tRNA(Glu) + L-glutamate + ATP = L-glutamyl-tRNA(Glu) + AMP + diphosphate. Catalyzes the attachment of glutamate to tRNA(Glu) in a two-step reaction: glutamate is first activated by ATP to form Glu-AMP and then transferred to the acceptor end of tRNA(Glu). The chain is Glutamate--tRNA ligase from Pseudomonas fluorescens (strain Pf0-1).